Reading from the N-terminus, the 149-residue chain is Calmodulin-2 (149 aa).

EF-hand domains lie at 8-43 (DQISEFKEAFSLFDKDGDGCITTKELGTVMRSLGQN), 44-79 (PTEAELQDMINEVDADGNGTIDFPEFLNLMARKMKD), 81-116 (DSEEELKEAFRVFDKDQNGFISAAELRHVMTNLGEK), and 117-149 (LTDEEVDEMIKEADVDGDGQINYEEFVKVMMAK). Asp-21, Asp-23, Asp-25, Cys-27, Glu-32, Asp-57, Asp-59, Asn-61, Thr-63, Glu-68, Asp-94, Asp-96, Asn-98, Glu-105, Asp-130, Asp-132, Asp-134, Gln-136, and Glu-141 together coordinate Ca(2+).

It belongs to the calmodulin family. In terms of assembly, interacts with KCBP and CIP111. Binds to IQD1 and IQD20.

Its subcellular location is the cytoplasm. It localises to the cytoskeleton. Calmodulin mediates the control of a large number of enzymes, ion channels and other proteins by Ca(2+). Among the enzymes to be stimulated by the calmodulin-Ca(2+) complex are a number of protein kinases and phosphatases. The chain is Calmodulin-2 (CAM2) from Arabidopsis thaliana (Mouse-ear cress).